The sequence spans 1011 residues: MSNPFAFRSAQVTFWTTVVYLALLVPLVVINEGVPPVQPDGSLFLDRGLNLTEAWLDLGHITERFHHQNSRENDVVRDYLRLRIEQIIAANDAEARTTVFNDLTSNVTYLAWGSAVPTHYQGNNLYVYIRGKDDDQGEWWHNARAGKLIGKGGVLVNAHFDSVSTAYGATDDGMGTVTVLQMIRYFTKPGNQPQRGIVALLNNAEEPGLLGAAAFGKSPLLPFIHTFLNLEGAGAGSRCVLFRSTDREVTSAFSNVQSPFGSVVGSDGFKMGLVRSGTDYSVWHDIYGQRGLDLAFYRPRALYHTNQDDTKHTSRESLWQMMAASTTTLINLSADTGSDYIGDRPDGDRSKAPNGSPSDGVWFDLFGSTFVLFGLRGMFAWSLTVLIVGPLTLFGMMYLVHKQGKGYAFHTKLRATSDSSSEDGDDEDGEVIRLGGWKGFFRFPFALIVAGALVTGAALLLRKMNPFIIYSSEYAVWAMMISLFYFGFWLIMRGSSYTRPSALHRLYVHIWLFILGWVALVFATVLEDRMRIASGYIFVFWESQVFLATLVAVCELFSLPRKIDFARGAAEEAEVRDHLEAVPHSDAVIAPSLEEATSPQRAGQSSNSPQEDDEDDVPDEETPLFRKAGRGNKLDTSFLRRGYRRSVSAIMDSNNEAEDGPKRKQPFEGEQAWSGPMVTSTWILQFLLLGPFMVILGGQVGLLLTSAVNQTGVDGSSLLAPYLMIAALSAILLMPLSPFIHRVTKHVPLFLLAVAFATLIYSLVAFPFSPRAPYKTFFRQTVDLDTGDTQVHLAGVEQYLRKIIADVPSALGQEIACDASSSRRDLVDCTYDAAQVPPIPTYGSGKKSFDLPPGVSPGPAYYGKLLTVTVVNTTAKIATQGSKTARLKIDAVDTRVVELRFSKEGPPIRSFRVVGADSWDDRFGAFPDDGARVLRLWRRDWESSFVVDITWKVDGGNTRGLEGRAVALWSDANDAVNTMPAFREVVRYAPAWATVSKAAPGLVEGSKAFKV.

At 1-9 (MSNPFAFRS) the chain is on the cytoplasmic side. The helical transmembrane segment at 10–30 (AQVTFWTTVVYLALLVPLVVI) threads the bilayer. Over 31–378 (NEGVPPVQPD…TFVLFGLRGM (348 aa)) the chain is Vacuolar. Residues Asn-50 and Asn-106 are each glycosylated (N-linked (GlcNAc...) asparagine). Residues His-159 and Asp-171 each coordinate Zn(2+). The active-site Proton acceptor is the Glu-205. 3 residues coordinate Zn(2+): Glu-206, Glu-231, and His-304. N-linked (GlcNAc...) asparagine glycosylation occurs at Asn-331. Residues 379–399 (FAWSLTVLIVGPLTLFGMMYL) traverse the membrane as a helical segment. Residues 400–439 (VHKQGKGYAFHTKLRATSDSSSEDGDDEDGEVIRLGGWKG) lie on the Cytoplasmic side of the membrane. A helical membrane pass occupies residues 440–460 (FFRFPFALIVAGALVTGAALL). Residues 461-471 (LRKMNPFIIYS) lie on the Vacuolar side of the membrane. The helical transmembrane segment at 472-492 (SEYAVWAMMISLFYFGFWLIM) threads the bilayer. The Cytoplasmic segment spans residues 493–505 (RGSSYTRPSALHR). A helical membrane pass occupies residues 506–526 (LYVHIWLFILGWVALVFATVL). Residues 527-536 (EDRMRIASGY) lie on the Vacuolar side of the membrane. A helical membrane pass occupies residues 537–557 (IFVFWESQVFLATLVAVCELF). The Cytoplasmic portion of the chain corresponds to 558–682 (SLPRKIDFAR…WSGPMVTSTW (125 aa)). Residues 595–609 (EATSPQRAGQSSNSP) are compositionally biased toward polar residues. Disordered regions lie at residues 595–627 (EATS…LFRK) and 650–671 (IMDS…EGEQ). Over residues 610-622 (QEDDEDDVPDEET) the composition is skewed to acidic residues. Residues 683–703 (ILQFLLLGPFMVILGGQVGLL) form a helical membrane-spanning segment. Over 704–719 (LTSAVNQTGVDGSSLL) the chain is Vacuolar. N-linked (GlcNAc...) asparagine glycosylation is present at Asn-709. Residues 720 to 740 (APYLMIAALSAILLMPLSPFI) traverse the membrane as a helical segment. At 741-747 (HRVTKHV) the chain is on the cytoplasmic side. The chain crosses the membrane as a helical span at residues 748–768 (PLFLLAVAFATLIYSLVAFPF). Topologically, residues 769–1011 (SPRAPYKTFF…LVEGSKAFKV (243 aa)) are vacuolar. Residue Asn-872 is glycosylated (N-linked (GlcNAc...) asparagine).

The protein belongs to the peptidase M28 family. It depends on Zn(2+) as a cofactor.

It localises to the vacuole membrane. Its function is as follows. May be involved in vacuolar sorting and osmoregulation. The chain is Vacuolar membrane protease from Pyricularia oryzae (strain 70-15 / ATCC MYA-4617 / FGSC 8958) (Rice blast fungus).